A 115-amino-acid polypeptide reads, in one-letter code: Virulence-associated protein A' (115 aa).

The HTH cro/C1-type domain maps to 16–70; sequence IKSDLDGLGINITEAAKALDVTRAALSEIINGKRGISAKMAWKLSKAFTNSDPEF. Residues 27–46 constitute a DNA-binding region (H-T-H motif); the sequence is ITEAAKALDVTRAALSEIIN.

It belongs to the VapA/VapI family.

This is Virulence-associated protein A' (vapA') from Dichelobacter nodosus (Bacteroides nodosus).